We begin with the raw amino-acid sequence, 177 residues long: MSRVAKAPVSIPAGVEVTLNEQTLTVKGAKGSLTRVINNAVNVVIENGVIKFLPVEGAVGAWAQAGTTRALVNNMVVGVSQGFERKLKLVGVGYRAKLVGADIDLTLGFSHPLVHKLPAGVTAECPSQTDIVLRGVDKQLIGQVAAEIRGYRPPEPYKGKGVRYDDEEVRRKEAKKK.

Residues Arg152 to Arg171 show a composition bias toward basic and acidic residues. A disordered region spans residues Arg152–Lys177.

It belongs to the universal ribosomal protein uL6 family. As to quaternary structure, part of the 50S ribosomal subunit.

This protein binds to the 23S rRNA, and is important in its secondary structure. It is located near the subunit interface in the base of the L7/L12 stalk, and near the tRNA binding site of the peptidyltransferase center. This chain is Large ribosomal subunit protein uL6, found in Shewanella oneidensis (strain ATCC 700550 / JCM 31522 / CIP 106686 / LMG 19005 / NCIMB 14063 / MR-1).